Reading from the N-terminus, the 156-residue chain is Small ribosomal subunit protein uS7 (156 aa).

The protein belongs to the universal ribosomal protein uS7 family. Part of the 30S ribosomal subunit. Contacts proteins S9 and S11.

Functionally, one of the primary rRNA binding proteins, it binds directly to 16S rRNA where it nucleates assembly of the head domain of the 30S subunit. Is located at the subunit interface close to the decoding center, probably blocks exit of the E-site tRNA. In Listeria innocua serovar 6a (strain ATCC BAA-680 / CLIP 11262), this protein is Small ribosomal subunit protein uS7.